Consider the following 159-residue polypeptide: Mesogenin-1 (159 aa).

The interval 79-101 (PGQARLPKGTKVRMSAQRRRKAS) is disordered. Over residues 86 to 100 (KGTKVRMSAQRRRKA) the composition is skewed to basic residues. One can recognise a bHLH domain in the interval 95–149 (QRRRKASEREKLRMRTLADALHTLRNYLPPAYSQRGQPLTKIQTLKCTIKYISEL).

It is found in the nucleus. Involved in specifying the paraxial, but not dorsal, mesoderm. May regulate the expression of T-box transcription factors required for mesoderm formation and differentiation. The polypeptide is Mesogenin-1 (MSGN1) (Gallus gallus (Chicken)).